The primary structure comprises 231 residues: Probable septum site-determining protein MinC (231 aa).

Residues Lys102–Thr125 form a disordered region.

Belongs to the MinC family. Interacts with MinD and FtsZ.

Cell division inhibitor that blocks the formation of polar Z ring septums. Rapidly oscillates between the poles of the cell to destabilize FtsZ filaments that have formed before they mature into polar Z rings. Prevents FtsZ polymerization. The chain is Probable septum site-determining protein MinC from Escherichia coli O139:H28 (strain E24377A / ETEC).